Here is a 273-residue protein sequence, read N- to C-terminus: Salivary glue protein Sgs-3 (273 aa).

An N-terminal signal peptide occupies residues 1-23 (MKLTIAISLASILLLSVAHVAQG). Over residues 47–57 (TTTTTTTTCAP) the composition is skewed to low complexity. The interval 47–225 (TTTTTTTTCA…TPKPTNKPGC (179 aa)) is disordered. Pro residues predominate over residues 58–67 (PTRPPPPPCT). The segment covering 83–225 (RRTTTTTRQT…TPKPTNKPGC (143 aa)) has biased composition (low complexity).

The chain is Salivary glue protein Sgs-3 (Sgs3) from Drosophila yakuba (Fruit fly).